A 133-amino-acid polypeptide reads, in one-letter code: Putative esterase STK_17900 (133 aa).

The protein belongs to the thioesterase PaaI family.

The chain is Putative esterase STK_17900 from Sulfurisphaera tokodaii (strain DSM 16993 / JCM 10545 / NBRC 100140 / 7) (Sulfolobus tokodaii).